The chain runs to 265 residues: Capsule polysaccharide export inner-membrane protein BexB (265 aa).

The next 6 membrane-spanning stretches (helical) occupy residues Ile37–Trp57, Lys64–Trp84, Leu118–Ile138, Leu151–Ile171, Phe178–Phe198, and Glu235–Val255. The 222-residue stretch at Ile37–Phe258 folds into the ABC transmembrane type-2 domain.

It belongs to the ABC-2 integral membrane protein family.

Its subcellular location is the cell inner membrane. Functionally, may form an ATP-driven capsule polysaccharide export apparatus, in association with the BexA, BexC and BexD proteins. The protein is Capsule polysaccharide export inner-membrane protein BexB (bexB) of Haemophilus influenzae.